Reading from the N-terminus, the 384-residue chain is uncharacterized protein (384 aa).

This is an uncharacterized protein from Nostoc sp. (strain PCC 7120 / SAG 25.82 / UTEX 2576).